A 97-amino-acid polypeptide reads, in one-letter code: Sperm-associated acrosin inhibitor (97 aa).

Positions M1–F26 are cleaved as a signal peptide. One can recognise a Kazal-like domain in the interval T32 to E90. 3 cysteine pairs are disulfide-bonded: C38/C70, C48/C67, and C56/C88.

As to expression, seminal plasma.

The protein localises to the secreted. Inhibits acrosin. This Sus scrofa (Pig) protein is Sperm-associated acrosin inhibitor.